A 271-amino-acid polypeptide reads, in one-letter code: Bis(5'-nucleosyl)-tetraphosphatase, symmetrical (271 aa).

Belongs to the Ap4A hydrolase family.

The catalysed reaction is P(1),P(4)-bis(5'-adenosyl) tetraphosphate + H2O = 2 ADP + 2 H(+). Its function is as follows. Hydrolyzes diadenosine 5',5'''-P1,P4-tetraphosphate to yield ADP. The chain is Bis(5'-nucleosyl)-tetraphosphatase, symmetrical from Aliivibrio fischeri (strain ATCC 700601 / ES114) (Vibrio fischeri).